Reading from the N-terminus, the 514-residue chain is Histidine ammonia-lyase (514 aa).

The 5-imidazolinone (Ala-Gly) cross-link spans Ala-142–Gly-144. Ser-143 carries the post-translational modification 2,3-didehydroalanine (Ser).

This sequence belongs to the PAL/histidase family. In terms of processing, contains an active site 4-methylidene-imidazol-5-one (MIO), which is formed autocatalytically by cyclization and dehydration of residues Ala-Ser-Gly.

It localises to the cytoplasm. It catalyses the reaction L-histidine = trans-urocanate + NH4(+). Its pathway is amino-acid degradation; L-histidine degradation into L-glutamate; N-formimidoyl-L-glutamate from L-histidine: step 1/3. This Sorangium cellulosum (strain So ce56) (Polyangium cellulosum (strain So ce56)) protein is Histidine ammonia-lyase.